The chain runs to 429 residues: Adenylosuccinate synthetase (429 aa).

Residues 12–18 (GDEGKGK) and 40–42 (GHT) contribute to the GTP site. The active-site Proton acceptor is Asp13. Positions 13 and 40 each coordinate Mg(2+). Residues 13–16 (DEGK), 38–41 (NAGH), Thr128, Arg142, Gln223, Thr238, and Arg302 each bind IMP. His41 (proton donor) is an active-site residue. Residue 298-304 (TTTGRPR) participates in substrate binding. Residues Arg304, 330 to 332 (SID), and 412 to 414 (SVG) contribute to the GTP site.

It belongs to the adenylosuccinate synthetase family. In terms of assembly, homodimer. Requires Mg(2+) as cofactor.

The protein localises to the cytoplasm. The enzyme catalyses IMP + L-aspartate + GTP = N(6)-(1,2-dicarboxyethyl)-AMP + GDP + phosphate + 2 H(+). It participates in purine metabolism; AMP biosynthesis via de novo pathway; AMP from IMP: step 1/2. Functionally, plays an important role in the de novo pathway of purine nucleotide biosynthesis. Catalyzes the first committed step in the biosynthesis of AMP from IMP. This Bacillus cereus (strain ZK / E33L) protein is Adenylosuccinate synthetase.